Reading from the N-terminus, the 109-residue chain is Cell cycle protein GpsB (109 aa).

A coiled-coil region spans residues 36–63 (IKDYETYAALVKSLRQEIADLKEELTRK).

This sequence belongs to the GpsB family. As to quaternary structure, forms polymers through the coiled coil domains. Interacts with PBP1, MreC and EzrA.

Its subcellular location is the cytoplasm. Its function is as follows. Divisome component that associates with the complex late in its assembly, after the Z-ring is formed, and is dependent on DivIC and PBP2B for its recruitment to the divisome. Together with EzrA, is a key component of the system that regulates PBP1 localization during cell cycle progression. Its main role could be the removal of PBP1 from the cell pole after pole maturation is completed. Also contributes to the recruitment of PBP1 to the division complex. Not essential for septum formation. The sequence is that of Cell cycle protein GpsB from Streptococcus pneumoniae serotype 4 (strain ATCC BAA-334 / TIGR4).